The following is a 147-amino-acid chain: Large ribosomal subunit protein bL9 (147 aa).

The protein belongs to the bacterial ribosomal protein bL9 family.

Its function is as follows. Binds to the 23S rRNA. The polypeptide is Large ribosomal subunit protein bL9 (Campylobacter jejuni subsp. jejuni serotype O:6 (strain 81116 / NCTC 11828)).